The chain runs to 342 residues: Protein BMEI1586 (342 aa).

S90 functions as the Proton acceptor in the catalytic mechanism. Substrate is bound by residues G91–S92, D251, and G256–T257.

It belongs to the proline racemase family. In terms of assembly, homotetramer.

The catalysed reaction is trans-4-hydroxy-L-proline = cis-4-hydroxy-D-proline. Functionally, in vitro, catalyzes the epimerization of trans-4-hydroxy-L-proline (t4LHyp) to cis-4-hydroxy-D-proline (c4DHyp) and that of trans-3-hydroxy-L-proline (t3LHyp) to cis-3-hydroxy-D-proline (c3DHyp), albeit with very low efficiency. The physiological substrate may be different. Displays neither proline racemase activity nor t3LHyp dehydratase activity. The polypeptide is Protein BMEI1586 (Brucella melitensis biotype 1 (strain ATCC 23456 / CCUG 17765 / NCTC 10094 / 16M)).